Here is an 860-residue protein sequence, read N- to C-terminus: LPS-assembly protein LptD (860 aa).

Residues 1–21 (MTKRYFSLLAVCSAIATSTFA) form the signal peptide.

It belongs to the LptD family. In terms of assembly, component of the lipopolysaccharide transport and assembly complex. Interacts with LptE and LptA.

The protein localises to the cell outer membrane. Its function is as follows. Together with LptE, is involved in the assembly of lipopolysaccharide (LPS) at the surface of the outer membrane. The chain is LPS-assembly protein LptD from Saccharophagus degradans (strain 2-40 / ATCC 43961 / DSM 17024).